Here is an 820-residue protein sequence, read N- to C-terminus: Phospholipase D alpha 3 (820 aa).

Positions 1-133 (MTEQLLLHGT…ITGQPIDRWL (133 aa)) constitute a C2 domain. D194 contributes to the Ca(2+) binding site. The PLD phosphodiesterase 1 domain maps to 334–371 (TMFTHHQKTIVVDSEVDGSLTKRRIVSFLGGIDLCDGR). Residues H339, K341, and D346 contribute to the active site. H339 lines the a 1,2-diacyl-sn-glycero-3-phosphate pocket. Ca(2+) is bound by residues H377 and H411. Residues Q528 and H667 each contribute to the a 1,2-diacyl-sn-glycero-3-phosphate site. Residues 662–689 (FMIYVHSKMMIVDDEYIIIGSANINQRS) form the PLD phosphodiesterase 2 domain. Catalysis depends on residues H667, K669, and D674. Position 730 (E730) interacts with Ca(2+).

It belongs to the phospholipase D family. C2-PLD subfamily. Requires Ca(2+) as cofactor. Expressed in buds, flowers, siliques, stems, old leaves and roots. Expressed in the sieve elements.

The protein resides in the cytoplasm. It is found in the membrane. The catalysed reaction is a 1,2-diacyl-sn-glycero-3-phosphocholine + H2O = a 1,2-diacyl-sn-glycero-3-phosphate + choline + H(+). Hydrolyzes glycerol-phospholipids at the terminal phosphodiesteric bond to generate phosphatidic acids (PA). Active with phosphatidylcholine (PC), phosphatidylethanolamine (PE), phosphatidylglycerol (PG), and phosphatidylserine (PS) as substrates. No activity toward phosphatidylinositol (PI) or PIP2. Positively mediates plant responses to hyperosmotic stresses and promotes root growth, flowering, and stress avoidance. Not involved in the abscisic acid regulation of stomatal movement and transpirational water loss. The sequence is that of Phospholipase D alpha 3 from Arabidopsis thaliana (Mouse-ear cress).